The primary structure comprises 207 residues: Na(+)-translocating NADH-quinone reductase subunit D (207 aa).

6 helical membrane-spanning segments follow: residues 20-40, 41-61, 69-89, 102-122, 130-150, and 177-197; these read IALQILGICSALAVTTQLQTA, FVMAIAVSLVTAFSSMFISMI, IRIIVQMAIIASLVILVDQIL, VFVGLIITNCIVMGRAEAFAM, FVDGIGNGLGYGAMLVIVAFL, and NGLFLLAPSAFFIIGFVIWAI.

The protein belongs to the NqrDE/RnfAE family. As to quaternary structure, composed of six subunits; NqrA, NqrB, NqrC, NqrD, NqrE and NqrF.

It localises to the cell inner membrane. It catalyses the reaction a ubiquinone + n Na(+)(in) + NADH + H(+) = a ubiquinol + n Na(+)(out) + NAD(+). In terms of biological role, NQR complex catalyzes the reduction of ubiquinone-1 to ubiquinol by two successive reactions, coupled with the transport of Na(+) ions from the cytoplasm to the periplasm. NqrA to NqrE are probably involved in the second step, the conversion of ubisemiquinone to ubiquinol. The protein is Na(+)-translocating NADH-quinone reductase subunit D of Haemophilus ducreyi (strain 35000HP / ATCC 700724).